Consider the following 1030-residue polypeptide: Protein KRBA1 (1030 aa).

Disordered regions lie at residues 27–56 (EPGR…GQPR), 80–208 (KGAM…NSPL), 225–255 (HPET…GSPP), 281–505 (EAQD…GLEN), and 634–788 (GGPS…PASS). S101 is subject to Phosphoserine. The span at 102 to 114 (PEAAAAREPCPLR) shows a compositional bias: low complexity. A compositionally biased stretch (polar residues) spans 124–143 (PTSQPHLATTPTDSSCSSGP). Residues 157-168 (TADKPWPTRKEG) are compositionally biased toward basic and acidic residues. S177, S182, S184, S229, S253, and S355 each carry phosphoserine. The segment covering 372–389 (PEAQAASASSSPLEALEA) has biased composition (low complexity). A compositionally biased stretch (polar residues) spans 397–418 (NGSSPSQLPPTSCSQNPQPGDS). The span at 419 to 437 (RSQKPELQPHRSHSEEATR) shows a compositional bias: basic and acidic residues. Composition is skewed to low complexity over residues 485–502 (QGQH…PLQG) and 642–651 (PGSSSSFSGS). The segment covering 654 to 674 (EDPRPEPDLWKPLPQERDRLP) has biased composition (basic and acidic residues). Over residues 689–698 (TPAGSSGGSP) the composition is skewed to gly residues. Positions 760-784 (QGPPELPSESPPPELPPPEAAPPVL) are enriched in pro residues. Positions 799–832 (LQQELHSLGAALAEKLDRLATALAGLAQEVATMR) form a coiled coil. Basic residues predominate over residues 870-887 (RHLPYWRQKGPTRPKPKI). Positions 870 to 1030 (RHLPYWRQKG…EHRDPRWGAH (161 aa)) are disordered. The segment covering 913–923 (PLPPDAPPAEP) has biased composition (pro residues). 2 stretches are compositionally biased toward low complexity: residues 929–953 (SSSQ…LLAH) and 966–984 (PAAL…ADAD). Residues 1019 to 1030 (GGEHRDPRWGAH) show a composition bias toward basic and acidic residues.

As to expression, expressed in brain (cerebellum).

The polypeptide is Protein KRBA1 (KRBA1) (Homo sapiens (Human)).